Here is a 513-residue protein sequence, read N- to C-terminus: Glutamate--tRNA ligase 2 (513 aa).

The 'HIGH' region motif lies at 11–21 (PSPTGFLHIGS). The 'KMSKS' region signature appears at 240–244 (KLSKR). K243 contacts ATP. Residues 335–383 (NTLLRHLPYREEFGGNTERSTAAYIDIREDASTGLTYKLPLAVELPKKF) form the RPE1 insert domain.

Belongs to the class-I aminoacyl-tRNA synthetase family. Glutamate--tRNA ligase type 1 subfamily. Monomer.

Its subcellular location is the cytoplasm. It catalyses the reaction tRNA(Glu) + L-glutamate + ATP = L-glutamyl-tRNA(Glu) + AMP + diphosphate. Functionally, catalyzes the attachment of glutamate to tRNA(Glu) in a two-step reaction: glutamate is first activated by ATP to form Glu-AMP and then transferred to the acceptor end of tRNA(Glu). This is Glutamate--tRNA ligase 2 from Rickettsia conorii (strain ATCC VR-613 / Malish 7).